We begin with the raw amino-acid sequence, 740 residues long: ATP-dependent zinc metalloprotease YME1L (740 aa).

The Mitochondrial matrix segment spans residues 1-256 (MFSTTTHSVP…KSGKTMKYLK (256 aa)). Residues 257 to 277 (TLQTIVVIVVFLGIFLSFFTT) traverse the membrane as a helical segment. At 278–740 (SNGSVFRSIQ…IKAILNESQT (463 aa)) the chain is on the mitochondrial intermembrane side. 347–351 (GTGKT) is a binding site for ATP. Position 563 (H563) interacts with Zn(2+). E564 is a catalytic residue. The Zn(2+) site is built by H567 and D641.

It in the N-terminal section; belongs to the AAA ATPase family. In the C-terminal section; belongs to the peptidase M41 family. The cofactor is Zn(2+).

The protein resides in the mitochondrion inner membrane. ATP-dependent metalloprotease that catalyzes the degradation of folded and unfolded proteins with a suitable degron sequence in the mitochondrial intermembrane region. Plays an important role in regulating mitochondrial morphology and function by cleaving Opa1, giving rise to a form of Opa1 that promotes maintenance of normal mitochondrial structure and mitochondrial protein metabolism. Ensures cell proliferation, maintains normal cristae morphology and complex I respiration activity, promotes antiapoptotic activity and protects mitochondria from the accumulation of oxidatively damaged membrane proteins. Required to control the accumulation of nonassembled respiratory chain subunits such as ND-30. This Drosophila melanogaster (Fruit fly) protein is ATP-dependent zinc metalloprotease YME1L.